The following is a 122-amino-acid chain: Putative iron-sulfur cluster insertion protein ErpA (122 aa).

Residues Cys50, Cys114, and Cys116 each coordinate iron-sulfur cluster.

This sequence belongs to the HesB/IscA family. Homodimer. The cofactor is iron-sulfur cluster.

Its function is as follows. Required for insertion of 4Fe-4S clusters. This chain is Putative iron-sulfur cluster insertion protein ErpA, found in Cupriavidus metallidurans (strain ATCC 43123 / DSM 2839 / NBRC 102507 / CH34) (Ralstonia metallidurans).